Consider the following 241-residue polypeptide: Carboxy-S-adenosyl-L-methionine synthase (241 aa).

S-adenosyl-L-methionine contacts are provided by residues Tyr-38, 63–65 (GCS), 88–89 (DN), 116–117 (DI), Asn-131, and Arg-198.

The protein belongs to the class I-like SAM-binding methyltransferase superfamily. Cx-SAM synthase family. Homodimer.

The catalysed reaction is prephenate + S-adenosyl-L-methionine = carboxy-S-adenosyl-L-methionine + 3-phenylpyruvate + H2O. Its function is as follows. Catalyzes the conversion of S-adenosyl-L-methionine (SAM) to carboxy-S-adenosyl-L-methionine (Cx-SAM). This Actinobacillus succinogenes (strain ATCC 55618 / DSM 22257 / CCUG 43843 / 130Z) protein is Carboxy-S-adenosyl-L-methionine synthase.